Here is a 180-residue protein sequence, read N- to C-terminus: Formate hydrogenlyase subunit 6 (180 aa).

2 consecutive 4Fe-4S ferredoxin-type domains span residues 31 to 60 (GKPE…VETD) and 66 to 95 (LAWE…LSQE). The [4Fe-4S] cluster site is built by Cys-40, Cys-43, Cys-46, Cys-50, Cys-75, Cys-78, Cys-81, and Cys-85.

In terms of assembly, FHL comprises of a formate dehydrogenase, unidentified electron carriers and a hydrogenase (isoenzyme 3). In this non-energy conserving pathway, molecular hydrogen and carbodioxide are released from formate.

Its function is as follows. Probable electron transfer protein for hydrogenase 3. The sequence is that of Formate hydrogenlyase subunit 6 (hycF) from Escherichia coli (strain K12).